Consider the following 77-residue polypeptide: Acyl carrier protein (77 aa).

The Carrier domain occupies serine 2 to glutamine 77. The residue at position 37 (serine 37) is an O-(pantetheine 4'-phosphoryl)serine.

It belongs to the acyl carrier protein (ACP) family. In terms of processing, 4'-phosphopantetheine is transferred from CoA to a specific serine of apo-ACP by AcpS. This modification is essential for activity because fatty acids are bound in thioester linkage to the sulfhydryl of the prosthetic group.

It localises to the cytoplasm. The protein operates within lipid metabolism; fatty acid biosynthesis. Its function is as follows. Carrier of the growing fatty acid chain in fatty acid biosynthesis. This Jannaschia sp. (strain CCS1) protein is Acyl carrier protein.